We begin with the raw amino-acid sequence, 170 residues long: Large ribosomal subunit protein uL10 (170 aa).

The protein belongs to the universal ribosomal protein uL10 family. In terms of assembly, part of the ribosomal stalk of the 50S ribosomal subunit. The N-terminus interacts with L11 and the large rRNA to form the base of the stalk. The C-terminus forms an elongated spine to which L12 dimers bind in a sequential fashion forming a multimeric L10(L12)X complex.

Forms part of the ribosomal stalk, playing a central role in the interaction of the ribosome with GTP-bound translation factors. In Jannaschia sp. (strain CCS1), this protein is Large ribosomal subunit protein uL10.